The primary structure comprises 283 residues: Polyamine aminopropyltransferase (283 aa).

The PABS domain maps to 5–240; sequence NTWFTEIHQD…GWWTATMACK (236 aa). Q33 is an S-methyl-5'-thioadenosine binding site. H64 and D88 together coordinate spermidine. S-methyl-5'-thioadenosine-binding positions include D108 and 139-140; that span reads DG. D158 acts as the Proton acceptor in catalysis. Residue 158 to 161 coordinates spermidine; the sequence is DSTD. P165 lines the S-methyl-5'-thioadenosine pocket.

Belongs to the spermidine/spermine synthase family. As to quaternary structure, homodimer or homotetramer.

It localises to the cytoplasm. The enzyme catalyses S-adenosyl 3-(methylsulfanyl)propylamine + putrescine = S-methyl-5'-thioadenosine + spermidine + H(+). It functions in the pathway amine and polyamine biosynthesis; spermidine biosynthesis; spermidine from putrescine: step 1/1. In terms of biological role, catalyzes the irreversible transfer of a propylamine group from the amino donor S-adenosylmethioninamine (decarboxy-AdoMet) to putrescine (1,4-diaminobutane) to yield spermidine. This is Polyamine aminopropyltransferase from Thioalkalivibrio sulfidiphilus (strain HL-EbGR7).